A 264-amino-acid polypeptide reads, in one-letter code: MKAYLDLMRHVLDNGTDKSDRTGTGTRSVFGYQMRFDLGKGFPLLTTKKLHLRSIIHELLWFLKGDTNIKYLKDNNVSIWDEWADENGDLGPVYGYQWRSWPAPDGRHIDQIANVVEQIKKNPDSRRLIVSAWNPALVDEMALPPCHALFQFYVADGKLSCQLYQRSADIFLGVPFNIASYALLTMMMAQVCGLEAGEFVHTFGDAHLYRNHFEQAALQLEREPRALPVMKINPEVKDLFAFKFEDFELEGYDPHPHIKAVVSV.

DUMP is bound at residue Arg-21. Residue His-51 participates in (6R)-5,10-methylene-5,6,7,8-tetrahydrofolate binding. 126–127 is a binding site for dUMP; the sequence is RR. The active-site Nucleophile is the Cys-146. DUMP is bound by residues 166–169, Asn-177, and 207–209; these read RSAD and HLY. Asp-169 contacts (6R)-5,10-methylene-5,6,7,8-tetrahydrofolate. Ser-263 is a binding site for (6R)-5,10-methylene-5,6,7,8-tetrahydrofolate.

Belongs to the thymidylate synthase family. Bacterial-type ThyA subfamily. Homodimer.

The protein localises to the cytoplasm. It catalyses the reaction dUMP + (6R)-5,10-methylene-5,6,7,8-tetrahydrofolate = 7,8-dihydrofolate + dTMP. It functions in the pathway pyrimidine metabolism; dTTP biosynthesis. In terms of biological role, catalyzes the reductive methylation of 2'-deoxyuridine-5'-monophosphate (dUMP) to 2'-deoxythymidine-5'-monophosphate (dTMP) while utilizing 5,10-methylenetetrahydrofolate (mTHF) as the methyl donor and reductant in the reaction, yielding dihydrofolate (DHF) as a by-product. This enzymatic reaction provides an intracellular de novo source of dTMP, an essential precursor for DNA biosynthesis. The protein is Thymidylate synthase of Neisseria gonorrhoeae (strain ATCC 700825 / FA 1090).